Consider the following 2035-residue polypeptide: Ral GTPase-activating protein subunit alpha-1 (2035 aa).

Disordered stretches follow at residues 343–384 (LVSR…SSLC) and 477–496 (DGEK…VRNS). Residues 345 to 365 (SREESKNDTVDKVDKSAEPEQ) show a composition bias toward basic and acidic residues. Composition is skewed to polar residues over residues 366 to 384 (SHSN…SSLC) and 486 to 496 (GTSTSEHVRNS). Serine 710 and serine 720 each carry phosphoserine. The segment at 714-752 (SFSRGWSRDQPGQAPMRQRSATTTGSPGTEKARSIVRQK) is disordered. Residue threonine 753 is modified to Phosphothreonine. Serine 772 is subject to Phosphoserine. At threonine 777 the chain carries Phosphothreonine. Serine 796 is modified (phosphoserine). Basic and acidic residues predominate over residues 807 to 817 (ERAKVNKEDTS). Disordered stretches follow at residues 807–834 (ERAK…SANV) and 848–911 (SGNA…SHSD). Polar residues-rich tracts occupy residues 824–833 (NSETGGNSAN) and 849–862 (GNAS…SSPG). Phosphoserine occurs at positions 859, 860, and 863. Over residues 894–911 (SPASAGSSDLMSSDSHSD) the composition is skewed to low complexity. Phosphoserine is present on residues serine 985, serine 989, serine 993, and serine 999. The span at 986-1008 (ESASPVHSALGSRSQTPSPSTLS) shows a compositional bias: polar residues. The tract at residues 986–1011 (ESASPVHSALGSRSQTPSPSTLSRAH) is disordered. The residue at position 1001 (threonine 1001) is a Phosphothreonine. A phosphoserine mark is found at serine 1003 and serine 1477. The interval 1326-2035 (FTNKTVAHVA…YHHFPADADH (710 aa)) is minimal domain that binds to TCF3/E12. Residues 1713 to 1748 (SEKQENDVINAILKQYTEEKEFVEKHFNDLNMKASE) adopt a coiled-coil conformation. A Rap-GAP domain is found at 1795–2003 (LRNLDSRQCR…EERARYLQTI (209 aa)).

As to quaternary structure, component of the heterodimeric RalGAP1 complex with RALGAPB. Heterodimerization is required for activity. Interacts with the HLH region of TCF3/isoform E12. In terms of tissue distribution, expressed during embryogenesis. Expressed in the adult brain, particularly in neurons of the cortex and hippocampus.

It is found in the cytoplasm. The protein resides in the nucleus. Functionally, catalytic subunit of the heterodimeric RalGAP1 complex which acts as a GTPase activator for the Ras-like small GTPases RALA and RALB. May interact with the HLH region of TCF3/isoform E12. The protein is Ral GTPase-activating protein subunit alpha-1 (Ralgapa1) of Mus musculus (Mouse).